The chain runs to 203 residues: Thymidylate kinase (203 aa).

10–17 is a binding site for ATP; sequence GIDGAGKS.

The protein belongs to the thymidylate kinase family.

It carries out the reaction dTMP + ATP = dTDP + ADP. In terms of biological role, phosphorylation of dTMP to form dTDP in both de novo and salvage pathways of dTTP synthesis. The chain is Thymidylate kinase from Cupriavidus pinatubonensis (strain JMP 134 / LMG 1197) (Cupriavidus necator (strain JMP 134)).